The chain runs to 209 residues: tRNA (guanine-N(7)-)-methyltransferase (209 aa).

The S-adenosyl-L-methionine site is built by aspartate 35, glutamate 60, asparagine 87, and aspartate 113. Aspartate 113 is an active-site residue. The substrate site is built by lysine 117 and aspartate 149.

Belongs to the class I-like SAM-binding methyltransferase superfamily. TrmB family.

The enzyme catalyses guanosine(46) in tRNA + S-adenosyl-L-methionine = N(7)-methylguanosine(46) in tRNA + S-adenosyl-L-homocysteine. The protein operates within tRNA modification; N(7)-methylguanine-tRNA biosynthesis. Functionally, catalyzes the formation of N(7)-methylguanine at position 46 (m7G46) in tRNA. This is tRNA (guanine-N(7)-)-methyltransferase from Prochlorococcus marinus (strain MIT 9515).